We begin with the raw amino-acid sequence, 153 residues long: Superoxide dismutase [Cu-Zn] (153 aa).

Positions 45, 47, and 62 each coordinate Cu cation. Cys56 and Cys145 form a disulfide bridge. 4 residues coordinate Zn(2+): His62, His70, His79, and Asp82. His119 lines the Cu cation pocket.

It belongs to the Cu-Zn superoxide dismutase family. In terms of assembly, homodimer. Cu cation is required as a cofactor. It depends on Zn(2+) as a cofactor.

It localises to the cytoplasm. The enzyme catalyses 2 superoxide + 2 H(+) = H2O2 + O2. Functionally, destroys radicals which are normally produced within the cells and which are toxic to biological systems. The chain is Superoxide dismutase [Cu-Zn] (SOD) from Schistosoma mansoni (Blood fluke).